Here is a 272-residue protein sequence, read N- to C-terminus: Putative phosphoenolpyruvate synthase regulatory protein (272 aa).

Residue 152-159 participates in ADP binding; it reads GVSRCGKT.

It belongs to the pyruvate, phosphate/water dikinase regulatory protein family. PSRP subfamily.

It catalyses the reaction [pyruvate, water dikinase] + ADP = [pyruvate, water dikinase]-phosphate + AMP + H(+). The catalysed reaction is [pyruvate, water dikinase]-phosphate + phosphate + H(+) = [pyruvate, water dikinase] + diphosphate. Bifunctional serine/threonine kinase and phosphorylase involved in the regulation of the phosphoenolpyruvate synthase (PEPS) by catalyzing its phosphorylation/dephosphorylation. The chain is Putative phosphoenolpyruvate synthase regulatory protein from Stutzerimonas stutzeri (strain A1501) (Pseudomonas stutzeri).